The primary structure comprises 242 residues: MAGHSKWANIKHKKAAADAKRGKVWTRLIKEIQVAARMGGGDIDSNPRLRLAVEKAYDANMPKDNVNRAIQRGVGGVDGASYEEIRYEGYGIGGAAVIVDTMTDNRTRTVAEVRHAFSKNGGNMGTDGSVSFMFDHVGQFLFAPGTAEDKLMEAALEAGADDVVTNDDGSIEVLCPPNDFPKVKSALEAAGFKAELAEVTMKPQTEVEFTGEDAVKMQKLLDALENLDDVQEVYTNAAIADE.

It belongs to the TACO1 family.

The protein localises to the cytoplasm. The protein is Probable transcriptional regulatory protein Bphyt_1301 of Paraburkholderia phytofirmans (strain DSM 17436 / LMG 22146 / PsJN) (Burkholderia phytofirmans).